A 230-amino-acid polypeptide reads, in one-letter code: Large ribosomal subunit protein uL1 (230 aa).

The protein belongs to the universal ribosomal protein uL1 family. As to quaternary structure, part of the 50S ribosomal subunit.

Its function is as follows. Binds directly to 23S rRNA. The L1 stalk is quite mobile in the ribosome, and is involved in E site tRNA release. Protein L1 is also a translational repressor protein, it controls the translation of the L11 operon by binding to its mRNA. The sequence is that of Large ribosomal subunit protein uL1 from Bifidobacterium longum (strain DJO10A).